Here is a 214-residue protein sequence, read N- to C-terminus: Protein-L-isoaspartate O-methyltransferase (214 aa).

S63 is an active-site residue.

Belongs to the methyltransferase superfamily. L-isoaspartyl/D-aspartyl protein methyltransferase family.

Its subcellular location is the cytoplasm. It catalyses the reaction [protein]-L-isoaspartate + S-adenosyl-L-methionine = [protein]-L-isoaspartate alpha-methyl ester + S-adenosyl-L-homocysteine. Its function is as follows. Catalyzes the methyl esterification of L-isoaspartyl residues in peptides and proteins that result from spontaneous decomposition of normal L-aspartyl and L-asparaginyl residues. It plays a role in the repair and/or degradation of damaged proteins. This chain is Protein-L-isoaspartate O-methyltransferase, found in Desulfotalea psychrophila (strain LSv54 / DSM 12343).